We begin with the raw amino-acid sequence, 436 residues long: 2-aminohexano-6-lactam racemase (436 aa).

Residues 110–111, Tyr137, and 238–241 contribute to the pyridoxal 5'-phosphate site; these read GS and DEVK. Tyr137 is a catalytic residue. Lys267 is modified (N6-(pyridoxal phosphate)lysine). Thr295 lines the pyridoxal 5'-phosphate pocket.

Belongs to the class-III pyridoxal-phosphate-dependent aminotransferase family. As to quaternary structure, monomer. Pyridoxal 5'-phosphate is required as a cofactor.

The enzyme catalyses L-2-aminohexano-6-lactam = D-2-aminohexano-6-lactam. In terms of biological role, catalyzes the interconversion of L-alpha-amino-epsilon-caprolactam and D-alpha-amino-epsilon-caprolactam. This is 2-aminohexano-6-lactam racemase from Achromobacter obae.